We begin with the raw amino-acid sequence, 352 residues long: Protein MGF 360-16R (352 aa).

It belongs to the asfivirus MGF 360 family.

Its function is as follows. Plays a role in virus cell tropism, and may be required for efficient virus replication in macrophages. The sequence is that of Protein MGF 360-16R from Ornithodoros (relapsing fever ticks).